Here is a 611-residue protein sequence, read N- to C-terminus: Chaperone protein DnaK (611 aa).

T173 is subject to Phosphothreonine; by autocatalysis. Positions 577 to 592 (QAAAGQAEGAEGAQDA) are enriched in low complexity. The disordered stretch occupies residues 577 to 598 (QAAAGQAEGAEGAQDAGAKKDN).

Belongs to the heat shock protein 70 family.

In terms of biological role, acts as a chaperone. This chain is Chaperone protein DnaK, found in Bacillus anthracis (strain A0248).